We begin with the raw amino-acid sequence, 81 residues long: Photosystem I iron-sulfur center (81 aa).

2 consecutive 4Fe-4S ferredoxin-type domains span residues 2–31 and 39–68; these read SHIV…MVPW and MASA…VRVY. [4Fe-4S] cluster-binding residues include Cys11, Cys14, Cys17, Cys21, Cys48, Cys51, Cys54, and Cys58.

As to quaternary structure, the eukaryotic PSI reaction center is composed of at least 11 subunits. [4Fe-4S] cluster serves as cofactor.

It is found in the plastid. The protein resides in the chloroplast thylakoid membrane. It carries out the reaction reduced [plastocyanin] + hnu + oxidized [2Fe-2S]-[ferredoxin] = oxidized [plastocyanin] + reduced [2Fe-2S]-[ferredoxin]. Apoprotein for the two 4Fe-4S centers FA and FB of photosystem I (PSI); essential for photochemical activity. FB is the terminal electron acceptor of PSI, donating electrons to ferredoxin. The C-terminus interacts with PsaA/B/D and helps assemble the protein into the PSI complex. Required for binding of PsaD and PsaE to PSI. PSI is a plastocyanin/cytochrome c6-ferredoxin oxidoreductase, converting photonic excitation into a charge separation, which transfers an electron from the donor P700 chlorophyll pair to the spectroscopically characterized acceptors A0, A1, FX, FA and FB in turn. In Stigeoclonium helveticum (Green alga), this protein is Photosystem I iron-sulfur center.